The sequence spans 152 residues: Ribonuclease H (152 aa).

The 142-residue stretch at 6-147 (KKNNVIAYTD…ADELANKAIA (142 aa)) folds into the RNase H type-1 domain. Positions 15, 53, 75, and 139 each coordinate Mg(2+).

Belongs to the RNase H family. Monomer. It depends on Mg(2+) as a cofactor.

The protein resides in the cytoplasm. The catalysed reaction is Endonucleolytic cleavage to 5'-phosphomonoester.. Functionally, endonuclease that specifically degrades the RNA of RNA-DNA hybrids. The protein is Ribonuclease H of Francisella philomiragia subsp. philomiragia (strain ATCC 25017 / CCUG 19701 / FSC 153 / O#319-036).